A 552-amino-acid chain; its full sequence is Leiomodin-2 (552 aa).

An interaction with tropomyosin alpha region spans residues 1–47; sequence MSTFGYRRELSKYEDIDEDELLASLTEEELKELERELEDIEPDRNLP. Interaction with actin stretches follow at residues 1–169 and 170–498; these read MSTF…SSHV and RHKK…KEIK. Residues 13–46 are a coiled coil; that stretch reads YEDIDEDELLASLTEEELKELERELEDIEPDRNL. 3 disordered regions span residues 33-67, 87-191, and 364-531; these read LERE…FSRE, GACE…DGKD, and MDKQ…DNLM. Positions 51-64 are enriched in polar residues; sequence RQKSLTEKTPTGTF. Residues 86 to 151 adopt a coiled-coil conformation; that stretch reads LGACEKDSEQ…DDEDEEKQNS (66 aa). Acidic residues-rich tracts occupy residues 93–108 and 115–147; these read SEQE…EECF and VSEE…EDEE. A compositionally biased stretch (basic and acidic residues) spans 364–377; sequence MDKQRQKRMQEQRQ. Residues 398-415 are compositionally biased toward low complexity; it reads PRSSPYTSPKSSPWSSPK. The segment covering 425-450 has biased composition (pro residues); the sequence is SQPPAPAPPPPPPPPPPPPPPPPPVI. Over residues 478 to 488 the composition is skewed to basic residues; that stretch reads QKKKKGKKGKK. Positions 489–513 are enriched in basic and acidic residues; the sequence is HENSILKEIKDSLKSVSDRKSEEGS. Residues 514–524 show a composition bias toward polar residues; sequence RPSTRPSTPQR. The interval 526-545 is interaction with actin 3; it reads LHDNLMEAIRASSIKQLRRV. The region spanning 526–545 is the WH2 domain; that stretch reads LHDNLMEAIRASSIKQLRRV.

The protein belongs to the tropomodulin family. In terms of assembly, can bind at least three actin monomers and thereby provides a nucleus for actin filament formation. Interacts (via N-terminus) with tropomyosin alpha (TPM1) (via N-terminus). May also interact with TPM2 (via N-terminus).

The protein localises to the cytoplasm. The protein resides in the myofibril. It is found in the sarcomere. Its subcellular location is the m line. It localises to the cytoskeleton. Its function is as follows. Mediates nucleation of actin filaments and thereby promotes actin polymerization. Plays a role in the regulation of actin filament length. Required for normal sarcomere organization in the heart, and for normal heart function. The polypeptide is Leiomodin-2 (LMOD2) (Gallus gallus (Chicken)).